A 154-amino-acid polypeptide reads, in one-letter code: Style cell-cycle inhibitor 1-A (154 aa).

2 stretches are compositionally biased toward basic and acidic residues: residues M1–K11 and D24–K48. The segment at M1 to L84 is disordered. Residues G63–S77 are compositionally biased toward basic residues.

Specifically expressed in flowers pistils, especially in stigmas and styles. Barely detected in roots, stems, leaves, sepals, petals and stamen.

The protein resides in the nucleus. Component of the auxin signaling transduction pathway that regulates cell proliferation and differentiation during flowers stigmas and styles development. Involved in the regulation of auxin-related genes. This is Style cell-cycle inhibitor 1-A from Nicotiana tabacum (Common tobacco).